The primary structure comprises 442 residues: D-serine dehydratase (442 aa).

Lys118 carries the post-translational modification N6-(pyridoxal phosphate)lysine.

The protein belongs to the serine/threonine dehydratase family. DsdA subfamily. Monomer. The cofactor is pyridoxal 5'-phosphate.

It catalyses the reaction D-serine = pyruvate + NH4(+). This chain is D-serine dehydratase, found in Escherichia coli O6:H1 (strain CFT073 / ATCC 700928 / UPEC).